Consider the following 338-residue polypeptide: Ketol-acid reductoisomerase (NADP(+)) (338 aa).

Residues 1 to 181 form the KARI N-terminal Rossmann domain; sequence MKVFYDKDCD…GGGRAGIIET (181 aa). NADP(+) contacts are provided by residues 24 to 27, arginine 47, and serine 52; that span reads YGSQ. Residue histidine 107 is part of the active site. Glycine 133 contributes to the NADP(+) binding site. Residues 182–327 form the KARI C-terminal knotted domain; the sequence is DFREETETDL…GKLRAMMPWI (146 aa). Mg(2+)-binding residues include aspartate 190, glutamate 194, glutamate 226, and glutamate 230. Serine 251 is a substrate binding site.

Belongs to the ketol-acid reductoisomerase family. The cofactor is Mg(2+).

It carries out the reaction (2R)-2,3-dihydroxy-3-methylbutanoate + NADP(+) = (2S)-2-acetolactate + NADPH + H(+). The enzyme catalyses (2R,3R)-2,3-dihydroxy-3-methylpentanoate + NADP(+) = (S)-2-ethyl-2-hydroxy-3-oxobutanoate + NADPH + H(+). It participates in amino-acid biosynthesis; L-isoleucine biosynthesis; L-isoleucine from 2-oxobutanoate: step 2/4. The protein operates within amino-acid biosynthesis; L-valine biosynthesis; L-valine from pyruvate: step 2/4. Its function is as follows. Involved in the biosynthesis of branched-chain amino acids (BCAA). Catalyzes an alkyl-migration followed by a ketol-acid reduction of (S)-2-acetolactate (S2AL) to yield (R)-2,3-dihydroxy-isovalerate. In the isomerase reaction, S2AL is rearranged via a Mg-dependent methyl migration to produce 3-hydroxy-3-methyl-2-ketobutyrate (HMKB). In the reductase reaction, this 2-ketoacid undergoes a metal-dependent reduction by NADPH to yield (R)-2,3-dihydroxy-isovalerate. This chain is Ketol-acid reductoisomerase (NADP(+)), found in Bordetella petrii (strain ATCC BAA-461 / DSM 12804 / CCUG 43448).